The sequence spans 224 residues: Flagellar L-ring protein (224 aa).

An N-terminal signal peptide occupies residues 1 to 15; sequence MIKYIALASVVLLVG. Cys-16 carries the N-palmitoyl cysteine lipid modification. Cys-16 carries S-diacylglycerol cysteine lipidation.

Belongs to the FlgH family. The basal body constitutes a major portion of the flagellar organelle and consists of four rings (L,P,S, and M) mounted on a central rod.

Its subcellular location is the cell outer membrane. It is found in the bacterial flagellum basal body. Functionally, assembles around the rod to form the L-ring and probably protects the motor/basal body from shearing forces during rotation. In Shewanella frigidimarina (strain NCIMB 400), this protein is Flagellar L-ring protein.